Consider the following 347-residue polypeptide: Selenide, water dikinase (347 aa).

Selenocysteine 17 is an active-site residue. A non-standard amino acid (selenocysteine) is located at residue selenocysteine 17. Residues lysine 20 and 48–50 contribute to the ATP site; that span reads TAD. Aspartate 51 contacts Mg(2+). Residues aspartate 68, aspartate 91, and 139-141 contribute to the ATP site; that span reads GHS. A Mg(2+)-binding site is contributed by aspartate 91. Residue aspartate 227 participates in Mg(2+) binding.

The protein belongs to the selenophosphate synthase 1 family. Class I subfamily. In terms of assembly, homodimer. Requires Mg(2+) as cofactor.

The catalysed reaction is hydrogenselenide + ATP + H2O = selenophosphate + AMP + phosphate + 2 H(+). In terms of biological role, synthesizes selenophosphate from selenide and ATP. The chain is Selenide, water dikinase from Haemophilus influenzae (strain 86-028NP).